Consider the following 974-residue polypeptide: MSDDWDNNTAAAKTISFGSNPSGFGGGSGFGSGNTGGFGSGNAGGTGFGSSNNGGSGFGGNNNVGPRFGNGNAGGTGFGSGNAGGTGFGSGNAGGTGFGSGNAGGTGFGSGNAGGTGFGGGNAGGTGFGSGNAGGTGLGSGNAGGTGFGSGNAGGTGFGSGNAGGTGFGSGKAGGTGFGSGKAGGTGFGGNSNSGSGFGSGLTNGFGSGNNHESGFGGGKSGGFGGGNSGGSGFGSGGNSNGFGSGGGGQDRGERNNNCFNCQQPGHRSNDCPEPKKEREPRVCYNCQQPGHNSRDCPEERKPREGRNGFTGGSSGFGGGNGGGTGFDSGLTNGFGSGNNGESGFGSGGFGGNSNGFGSGGGGQDRGERNNNCFNCQQPGHRSNDCPEPKKEREPRVCYNCQQPGHNSRDCPEERKPREGRNGFTSGFGGGNDGGFGGGNAEGFGNNEERGPMKCFNCKGEGHRSAECPEPPRGCFNCGEQGHRSNECPNPAKPREGAEGEGPKATYVPVEDNMEEVFNMQKISEGLMFNKFFDAEVKITSDKKPVGVKTCKTFSEANLGETMKKNVAHAGYTKTTPIQQYTLPLIHQGHDIMACAQTGSGKTAAFLLPIMARLIDENDLNTAGEGGCYPRCIILTPTRELTDQIYNEGRKFAYQTMMEIRPVYGGLAVGYNKGQIEKGATIIVGTVGRIKHFCEEGTIKLDKCRFFVLDEADRMIDAMGFGTDIDTIVNYESMPKKENRQTLMFSATFPDSVQEAARNHLKEGYIMLAIDKIGAANKCVLQEFEKCDRSEKKDKLLEILGIDIDSYTTEKNSEVYTKKTIVFVSQRAMADTLASILSSAQVPAITIHGAREQRERSEALRQFRNGSKPVLIATAVAERGLDIKGVDHVINYDMPDNIDDYIHRIGRTGRVGNAGRATSFISEDCNLLSELVRVLSDADQLVPEWMQGASGGNFGASFGFESSVPTQKQDEDCW.

A disordered region spans residues 212–435 (HESGFGGGKS…SGFGGGNDGG (224 aa)). Residues 215–250 (GFGGGKSGGFGGGNSGGSGFGSGGNSNGFGSGGGGQ) are compositionally biased toward gly residues. A compositionally biased stretch (polar residues) spans 256–267 (NNNCFNCQQPGH). 2 consecutive CCHC-type zinc fingers follow at residues 257–274 (NNCF…DCPE) and 282–299 (RVCY…DCPE). Basic and acidic residues-rich tracts occupy residues 268-282 (RSND…REPR) and 293-307 (NSRD…REGR). Gly residues predominate over residues 309–364 (GFTGGSSGFGGGNGGGTGFDSGLTNGFGSGNNGESGFGSGGFGGNSNGFGSGGGGQ). The span at 370 to 381 (NNNCFNCQQPGH) shows a compositional bias: polar residues. CCHC-type zinc fingers lie at residues 371-388 (NNCF…DCPE) and 396-413 (RVCY…DCPE). Basic and acidic residues-rich tracts occupy residues 382–396 (RSND…REPR) and 407–421 (NSRD…REGR). The segment covering 426-435 (SGFGGGNDGG) has biased composition (gly residues). 2 CCHC-type zinc fingers span residues 453 to 470 (MKCF…ECPE) and 473 to 490 (RGCF…ECPN). The Q motif signature appears at 552–580 (KTFSEANLGETMKKNVAHAGYTKTTPIQQ). The region spanning 583–767 (LPLIHQGHDI…RNHLKEGYIM (185 aa)) is the Helicase ATP-binding domain. Residue 596–603 (AQTGSGKT) coordinates ATP. The short motif at 710 to 713 (DEAD) is the DEAD box element. The Helicase C-terminal domain occupies 803 to 950 (DIDSYTTEKN…LVPEWMQGAS (148 aa)).

Belongs to the DEAD box helicase family. DDX4/VASA subfamily. In terms of assembly, interacts (via C-terminus) with kgb-1.

It carries out the reaction ATP + H2O = ADP + phosphate + H(+). Functionally, probable ATP-binding RNA helicase. This Caenorhabditis elegans protein is ATP-dependent RNA helicase glh-2 (glh-2).